We begin with the raw amino-acid sequence, 122 residues long: MIQPQTYSNVADNSGARKLMCIRVLKASNRQYAHIGDVIIAIIKEAVPNMPLKESEIVRAVVVRTCKELKRDNGMIIRSDDNAAVIVDQEGNPRGTRVFGSVARELRQLNFAKIVSLAPEVL.

The protein belongs to the universal ribosomal protein uL14 family. Part of the 50S ribosomal subunit.

It localises to the plastid. The protein localises to the chloroplast. In terms of biological role, binds to 23S rRNA. The protein is Large ribosomal subunit protein uL14c of Cycas taitungensis (Prince sago).